The sequence spans 248 residues: Triosephosphate isomerase (248 aa).

9-11 (NWK) contributes to the substrate binding site. His-94 (electrophile) is an active-site residue. Glu-166 functions as the Proton acceptor in the catalytic mechanism. Substrate contacts are provided by residues Gly-172, Ser-212, and 233 to 234 (GG).

This sequence belongs to the triosephosphate isomerase family. In terms of assembly, homodimer.

It is found in the cytoplasm. The enzyme catalyses D-glyceraldehyde 3-phosphate = dihydroxyacetone phosphate. The protein operates within carbohydrate biosynthesis; gluconeogenesis. Its pathway is carbohydrate degradation; glycolysis; D-glyceraldehyde 3-phosphate from glycerone phosphate: step 1/1. Functionally, involved in the gluconeogenesis. Catalyzes stereospecifically the conversion of dihydroxyacetone phosphate (DHAP) to D-glyceraldehyde-3-phosphate (G3P). The polypeptide is Triosephosphate isomerase (Clostridium botulinum (strain Loch Maree / Type A3)).